The following is a 682-amino-acid chain: PWWP domain-containing DNA repair factor 3A (682 aa).

Phosphoserine is present on Ser-105. The interval 121 to 145 (EKTDADVASQVSSAPSPSLLGEDGQ) is disordered. A compositionally biased stretch (low complexity) spans 127-140 (VASQVSSAPSPSLL). At Ser-168 the chain carries Phosphoserine. Disordered stretches follow at residues 179–318 (GPKT…GAAP) and 334–369 (GAGD…EEEP). Over residues 203–220 (HGQESTTKKRQRNLGEKP) the composition is skewed to basic and acidic residues. Phosphoserine occurs at positions 345 and 346. Residues 346–357 (SEESTGFKSTHS) are compositionally biased toward polar residues. The region spanning 383–444 (VGMLVWLKYQ…KHFDCKEKHA (62 aa)) is the PWWP domain.

The protein belongs to the PWWP3A family. In terms of assembly, interacts with TP53BP1 (via BRCT domain); the interaction is not dependent on its phosphorylation status. Binds nucleosomes. Interacts with trimethylated 'Lys-36' of histone H3 (H3K36me3) (in vitro).

Its subcellular location is the nucleus. Functionally, involved in the DNA damage response pathway by contributing to the maintenance of chromatin architecture. Recruited to the vicinity of DNA breaks by TP53BP1 and plays an accessory role to facilitate damage-induced chromatin changes and promoting chromatin relaxation. Required for efficient DNA repair and cell survival following DNA damage. The protein is PWWP domain-containing DNA repair factor 3A (Pwwp3a) of Mus musculus (Mouse).